The chain runs to 1092 residues: Rho GTPase-activating protein 7 (1092 aa).

Residues 11–78 (LTQIEAKEAC…LNKCAVMKLE (68 aa)) form the SAM domain. Ser86, Ser89, and Ser129 each carry phosphoserine. Disordered stretches follow at residues 121 to 179 (PKQD…DATT), 297 to 330 (RSVSNSTQTSSSSSQSETSSAVSTPSPVTRTRSL), 409 to 434 (GPGHLSLRRENSHDSPKELKRRNSSS), and 492 to 553 (SDEG…SGVG). Positions 130-143 (PDNSRLQSATSHES) are enriched in polar residues. Composition is skewed to low complexity over residues 154-174 (VASVRSLSSTSSSVPTHAAHS) and 299-325 (VSNSTQTSSSSSQSETSSAVSTPSPVT). Residues 275 to 448 (QLNCVEISAL…RLSIYDNVPG (174 aa)) form a focal adhesion-targeting (FAT) region. At Ser322 the chain carries Phosphoserine. Residues 415 to 426 (LRRENSHDSPKE) are compositionally biased toward basic and acidic residues. The span at 500–512 (ALDSVSPCPSSPK) shows a compositional bias: polar residues. Basic and acidic residues predominate over residues 514 to 526 (IHLDVDHDRRTPS). Polar residues predominate over residues 527-536 (DLDSTGNSLN). A polybasic cluster (PBR) region spans residues 615-637 (KHGFSWAVPKFMKRIKVPDYKDR). Residues 642 to 848 (VPLTVNVQRS…HMIAECKKLF (207 aa)) form the Rho-GAP domain. The region spanning 878-1085 (NSDQPADYRH…RDSFSNQNTE (208 aa)) is the START domain.

Interacts with EF1A1, facilitates EF1A1 distribution to the membrane periphery and ruffles upon growth factor stimulation and suppresses cell migration. Interacts with tensin TNS1 (via N-terminus); the interaction is decreased by phosphorylation of TNS1. Interacts with TNS3 and PTEN; in resting cells, interacts with TNS3 (via C2 tensin-type domain) but, following growth factor stimulation, TNS3 and PTEN are phosphorylated which leads to weakened interaction with TNS3 and enhanced interaction with PTEN. Interacts (via C-terminus) with tensin TNS4 (via SH2 domain); the interaction is independent of tyrosine phosphorylation of DLC1. Widely expressed with the highest levels in heart, liver and lung.

It is found in the cytoplasm. Its subcellular location is the cell junction. The protein localises to the focal adhesion. It localises to the membrane. Functions as a GTPase-activating protein for the small GTPases RHOA, RHOB, RHOC and CDC42, terminating their downstream signaling. This induces morphological changes and detachment through cytoskeletal reorganization, playing a critical role in biological processes such as cell migration and proliferation. Also functions in vivo as an activator of the phospholipase PLCD1. Active DLC1 increases cell migration velocity but reduces directionality. Required for growth factor-induced epithelial cell migration; in resting cells, interacts with TNS3 while PTEN interacts with the p85 regulatory subunit of the PI3K kinase complex but growth factor stimulation induces phosphorylation of TNS3 and PTEN, causing them to change their binding preference so that PTEN interacts with DLC1 and TNS3 interacts with p85. The PTEN-DLC1 complex translocates to the posterior of migrating cells to activate RHOA while the TNS3-p85 complex translocates to the leading edge of migrating cells to promote RAC1 activation. The polypeptide is Rho GTPase-activating protein 7 (Dlc1) (Mus musculus (Mouse)).